The primary structure comprises 318 residues: Protein-methionine-sulfoxide reductase catalytic subunit MsrP (318 aa).

Positions 1–40 form a signal peptide, tat-type signal; sequence MKQLMMSDVTPEEIFNQRRQIIKSMGLGIATLGLPNIAFA. Mo-molybdopterin-binding positions include asparagine 72, 75–76, cysteine 130, threonine 165, asparagine 217, arginine 222, and 233–235; these read YE and SIK.

It belongs to the MsrP family. Heterodimer of a catalytic subunit (MsrP) and a heme-binding subunit (MsrQ). The cofactor is Mo-molybdopterin. Predicted to be exported by the Tat system. The position of the signal peptide cleavage has not been experimentally proven.

It is found in the periplasm. It carries out the reaction L-methionyl-[protein] + a quinone + H2O = L-methionyl-(S)-S-oxide-[protein] + a quinol. The catalysed reaction is L-methionyl-[protein] + a quinone + H2O = L-methionyl-(R)-S-oxide-[protein] + a quinol. In terms of biological role, part of the MsrPQ system that repairs oxidized periplasmic proteins containing methionine sulfoxide residues (Met-O), using respiratory chain electrons. Thus protects these proteins from oxidative-stress damage caused by reactive species of oxygen and chlorine generated by the host defense mechanisms. MsrPQ is essential for the maintenance of envelope integrity under bleach stress, rescuing a wide series of structurally unrelated periplasmic proteins from methionine oxidation. The catalytic subunit MsrP is non-stereospecific, being able to reduce both (R-) and (S-) diastereoisomers of methionine sulfoxide. In Haemophilus ducreyi (strain 35000HP / ATCC 700724), this protein is Protein-methionine-sulfoxide reductase catalytic subunit MsrP.